Here is a 257-residue protein sequence, read N- to C-terminus: Phosphonates import ATP-binding protein PhnC (257 aa).

The ABC transporter domain occupies 2–246 (IEFRNVSKVY…KFAEIYGDVA (245 aa)). 35-42 (GLSGAGKS) is a binding site for ATP.

This sequence belongs to the ABC transporter superfamily. Phosphonates importer (TC 3.A.1.9.1) family. In terms of assembly, the complex is composed of two ATP-binding proteins (PhnC), two transmembrane proteins (PhnE) and a solute-binding protein (PhnD).

The protein resides in the cell membrane. It carries out the reaction phosphonate(out) + ATP + H2O = phosphonate(in) + ADP + phosphate + H(+). Functionally, part of the ABC transporter complex PhnCDE involved in phosphonates import. Responsible for energy coupling to the transport system. This Bacillus cereus (strain ATCC 14579 / DSM 31 / CCUG 7414 / JCM 2152 / NBRC 15305 / NCIMB 9373 / NCTC 2599 / NRRL B-3711) protein is Phosphonates import ATP-binding protein PhnC.